The chain runs to 185 residues: Hypoxanthine/guanine phosphoribosyltransferase (185 aa).

Belongs to the purine/pyrimidine phosphoribosyltransferase family. Archaeal HPRT subfamily. In terms of assembly, homodimer.

It localises to the cytoplasm. The enzyme catalyses IMP + diphosphate = hypoxanthine + 5-phospho-alpha-D-ribose 1-diphosphate. It carries out the reaction GMP + diphosphate = guanine + 5-phospho-alpha-D-ribose 1-diphosphate. It participates in purine metabolism; IMP biosynthesis via salvage pathway; IMP from hypoxanthine: step 1/1. Its function is as follows. Catalyzes a salvage reaction resulting in the formation of IMP that is energically less costly than de novo synthesis. The polypeptide is Hypoxanthine/guanine phosphoribosyltransferase (Methanococcus maripaludis (strain C7 / ATCC BAA-1331)).